The following is a 335-amino-acid chain: Ornithine carbamoyltransferase (335 aa).

Residues 56 to 59, Gln83, Arg107, and 134 to 137 each bind carbamoyl phosphate; these read STRT and HPTQ. L-ornithine-binding positions include Asn168, Asp232, and 236 to 237; that span reads SM. Residues 274–275 and Arg320 contribute to the carbamoyl phosphate site; that span reads CL.

Belongs to the aspartate/ornithine carbamoyltransferase superfamily. OTCase family.

The protein resides in the cytoplasm. The catalysed reaction is carbamoyl phosphate + L-ornithine = L-citrulline + phosphate + H(+). It functions in the pathway amino-acid biosynthesis; L-arginine biosynthesis; L-arginine from L-ornithine and carbamoyl phosphate: step 1/3. Its function is as follows. Reversibly catalyzes the transfer of the carbamoyl group from carbamoyl phosphate (CP) to the N(epsilon) atom of ornithine (ORN) to produce L-citrulline. The sequence is that of Ornithine carbamoyltransferase from Yersinia pestis bv. Antiqua (strain Nepal516).